We begin with the raw amino-acid sequence, 140 residues long: Profilin (140 aa).

Ser-2 carries the N-acetylserine modification.

It belongs to the profilin family. In terms of assembly, occurs in many kinds of cells as a complex with monomeric actin in a 1:1 ratio.

It localises to the cytoplasm. The protein localises to the cytoskeleton. In terms of biological role, binds to actin and affects the structure of the cytoskeleton. At high concentrations, profilin prevents the polymerization of actin, whereas it enhances it at low concentrations. By binding to PIP2, it inhibits the formation of IP3 and DG. The sequence is that of Profilin from Heliocidaris crassispina (Sea urchin).